A 99-amino-acid chain; its full sequence is DNA-directed RNA polymerase subunit omega (99 aa).

It belongs to the RNA polymerase subunit omega family. In terms of assembly, the RNAP catalytic core consists of 2 alpha, 1 beta, 1 beta' and 1 omega subunit. When a sigma factor is associated with the core the holoenzyme is formed, which can initiate transcription.

It carries out the reaction RNA(n) + a ribonucleoside 5'-triphosphate = RNA(n+1) + diphosphate. Its function is as follows. Promotes RNA polymerase assembly. Latches the N- and C-terminal regions of the beta' subunit thereby facilitating its interaction with the beta and alpha subunits. This Xylella fastidiosa (strain 9a5c) protein is DNA-directed RNA polymerase subunit omega (rpoZ).